The following is a 437-amino-acid chain: Membrane protein NfeD1b (437 aa).

5 consecutive transmembrane segments (helical) span residues 2–22, 231–251, 253–273, 288–308, and 316–336; these read LQIKGFRAALLGIFLLSLLGV, WLTNPVIVPILLTIAFLGLTV, LFSPGVGLPGTAGLIALLLFF, LLFIAGVILILLEIFLPGGII, and IIASLFLAAGSFTVMAVSLLI.

It belongs to the NfeD family.

Its subcellular location is the cell membrane. In Bacillus subtilis (strain 168), this protein is Membrane protein NfeD1b.